We begin with the raw amino-acid sequence, 95 residues long: Opiscorpine-1 (95 aa).

Residues 1–19 (MNNKLTALIFLGLLAIASC) form the signal peptide. Residues 55–95 (EFMCVANVDMTKSCDTHCQKASGEKGYCHGTKCKCGVPLSY) form the BetaSPN-type CS-alpha/beta domain. 3 disulfides stabilise this stretch: Cys58–Cys82, Cys68–Cys87, and Cys72–Cys89.

This sequence belongs to the long chain scorpion toxin family. Class 3 subfamily. In terms of tissue distribution, expressed by the venom gland.

The protein resides in the secreted. Functionally, the short synthetic peptide (20-54) has antimicrobial activity against the yeasts F.culmorum (IC(50)=8.8 uM) and F.oxysporum (IC(50)=10 uM), and the Gram-negative bacteria E.coli. This chain is Opiscorpine-1, found in Opistophthalmus carinatus (African yellow leg scorpion).